The sequence spans 150 residues: Large ribosomal subunit protein uL13 (150 aa).

The protein belongs to the universal ribosomal protein uL13 family. Part of the 50S ribosomal subunit.

Its function is as follows. This protein is one of the early assembly proteins of the 50S ribosomal subunit, although it is not seen to bind rRNA by itself. It is important during the early stages of 50S assembly. The chain is Large ribosomal subunit protein uL13 from Chlorobaculum parvum (strain DSM 263 / NCIMB 8327) (Chlorobium vibrioforme subsp. thiosulfatophilum).